The sequence spans 712 residues: Ribosomal RNA large subunit methyltransferase K/L (712 aa).

A THUMP domain is found at 42–153 (QALRIVMWSR…KGRASLSIDL (112 aa)).

This sequence belongs to the methyltransferase superfamily. RlmKL family.

The protein resides in the cytoplasm. The enzyme catalyses guanosine(2445) in 23S rRNA + S-adenosyl-L-methionine = N(2)-methylguanosine(2445) in 23S rRNA + S-adenosyl-L-homocysteine + H(+). The catalysed reaction is guanosine(2069) in 23S rRNA + S-adenosyl-L-methionine = N(2)-methylguanosine(2069) in 23S rRNA + S-adenosyl-L-homocysteine + H(+). In terms of biological role, specifically methylates the guanine in position 2445 (m2G2445) and the guanine in position 2069 (m7G2069) of 23S rRNA. The polypeptide is Ribosomal RNA large subunit methyltransferase K/L (Stenotrophomonas maltophilia (strain R551-3)).